A 312-amino-acid chain; its full sequence is Glyoxylate/hydroxypyruvate reductase A (312 aa).

Arg227 is an active-site residue. The active-site Proton donor is the His275.

It belongs to the D-isomer specific 2-hydroxyacid dehydrogenase family. GhrA subfamily.

It is found in the cytoplasm. It carries out the reaction glycolate + NADP(+) = glyoxylate + NADPH + H(+). The catalysed reaction is (R)-glycerate + NAD(+) = 3-hydroxypyruvate + NADH + H(+). It catalyses the reaction (R)-glycerate + NADP(+) = 3-hydroxypyruvate + NADPH + H(+). In terms of biological role, catalyzes the NADPH-dependent reduction of glyoxylate and hydroxypyruvate into glycolate and glycerate, respectively. The protein is Glyoxylate/hydroxypyruvate reductase A of Escherichia coli O6:K15:H31 (strain 536 / UPEC).